Reading from the N-terminus, the 324-residue chain is Lipoyl synthase (324 aa).

Residues Cys-71, Cys-76, Cys-82, Cys-97, Cys-101, Cys-104, and Ser-311 each coordinate [4Fe-4S] cluster. One can recognise a Radical SAM core domain in the interval 83–300 (FGHGTATFLI…GDKAREMGFT (218 aa)).

This sequence belongs to the radical SAM superfamily. Lipoyl synthase family. [4Fe-4S] cluster is required as a cofactor.

It localises to the cytoplasm. The enzyme catalyses [[Fe-S] cluster scaffold protein carrying a second [4Fe-4S](2+) cluster] + N(6)-octanoyl-L-lysyl-[protein] + 2 oxidized [2Fe-2S]-[ferredoxin] + 2 S-adenosyl-L-methionine + 4 H(+) = [[Fe-S] cluster scaffold protein] + N(6)-[(R)-dihydrolipoyl]-L-lysyl-[protein] + 4 Fe(3+) + 2 hydrogen sulfide + 2 5'-deoxyadenosine + 2 L-methionine + 2 reduced [2Fe-2S]-[ferredoxin]. Its pathway is protein modification; protein lipoylation via endogenous pathway; protein N(6)-(lipoyl)lysine from octanoyl-[acyl-carrier-protein]: step 2/2. Its function is as follows. Catalyzes the radical-mediated insertion of two sulfur atoms into the C-6 and C-8 positions of the octanoyl moiety bound to the lipoyl domains of lipoate-dependent enzymes, thereby converting the octanoylated domains into lipoylated derivatives. This is Lipoyl synthase from Nitrosococcus oceani (strain ATCC 19707 / BCRC 17464 / JCM 30415 / NCIMB 11848 / C-107).